Here is a 195-residue protein sequence, read N- to C-terminus: Probable DNA-directed RNA polymerase subunit delta (195 aa).

The HTH HARE-type domain maps to 14–81 (FALVEIATAI…GNNEWALRAW (68 aa)). Composition is skewed to acidic residues over residues 120-172 (DDDV…DESI) and 181-195 (GGDD…DQEK). The interval 120–195 (DDDVIDYNDD…DDLSDGDQEK (76 aa)) is disordered.

This sequence belongs to the RpoE family. As to quaternary structure, RNAP is composed of a core of 2 alpha, a beta and a beta' subunits. The core is associated with a delta subunit and one of several sigma factors.

Functionally, participates in both the initiation and recycling phases of transcription. In the presence of the delta subunit, RNAP displays an increased specificity of transcription, a decreased affinity for nucleic acids, and an increased efficiency of RNA synthesis because of enhanced recycling. This chain is Probable DNA-directed RNA polymerase subunit delta, found in Leuconostoc mesenteroides subsp. mesenteroides (strain ATCC 8293 / DSM 20343 / BCRC 11652 / CCM 1803 / JCM 6124 / NCDO 523 / NBRC 100496 / NCIMB 8023 / NCTC 12954 / NRRL B-1118 / 37Y).